A 275-amino-acid chain; its full sequence is Aliphatic sulfonates import ATP-binding protein SsuB 1 (275 aa).

An ABC transporter domain is found at I34 to L260. An ATP-binding site is contributed by G66 to S73.

The protein belongs to the ABC transporter superfamily. Aliphatic sulfonates importer (TC 3.A.1.17.2) family. In terms of assembly, the complex is composed of two ATP-binding proteins (SsuB), two transmembrane proteins (SsuC) and a solute-binding protein (SsuA).

It localises to the cell inner membrane. The catalysed reaction is ATP + H2O + aliphatic sulfonate-[sulfonate-binding protein]Side 1 = ADP + phosphate + aliphatic sulfonateSide 2 + [sulfonate-binding protein]Side 1.. In terms of biological role, part of the ABC transporter complex SsuABC involved in aliphatic sulfonates import. Responsible for energy coupling to the transport system. This chain is Aliphatic sulfonates import ATP-binding protein SsuB 1, found in Rhizobium johnstonii (strain DSM 114642 / LMG 32736 / 3841) (Rhizobium leguminosarum bv. viciae).